The primary structure comprises 225 residues: Thymidine kinase (225 aa).

15-22 lines the ATP pocket; it reads GSMFSGKT. The segment at 85-110 is disordered; sequence KKQNHRTTTQCRSGDGTNNPGGVIPS. Over residues 90–104 the composition is skewed to polar residues; it reads RTTTQCRSGDGTNNP. 121-124 is a binding site for ATP; that stretch reads DEAN. The active-site Proton acceptor is glutamate 122. Residues cysteine 178, cysteine 181, cysteine 216, and cysteine 219 each contribute to the Zn(2+) site.

This sequence belongs to the thymidine kinase family. As to quaternary structure, homotetramer.

Its subcellular location is the cytoplasm. It carries out the reaction thymidine + ATP = dTMP + ADP + H(+). In Haloquadratum walsbyi (strain DSM 16790 / HBSQ001), this protein is Thymidine kinase.